The sequence spans 583 residues: 5-aminolevulinate synthase, erythroid-specific, mitochondrial (583 aa).

Arginine 158 serves as a coordination point for succinyl-CoA. Pyridoxal 5'-phosphate contacts are provided by cysteine 253 and phenylalanine 254. Succinyl-CoA-binding residues include serine 275 and arginine 294. Pyridoxal 5'-phosphate-binding residues include serine 327, histidine 355, and threonine 383. Lysine 386 is an active-site residue. An N6-(pyridoxal phosphate)lysine modification is found at lysine 386. The pyridoxal 5'-phosphate site is built by threonine 415 and threonine 416. Threonine 503 contacts succinyl-CoA.

Belongs to the class-II pyridoxal-phosphate-dependent aminotransferase family. As to quaternary structure, homodimer. Requires pyridoxal 5'-phosphate as cofactor.

Its subcellular location is the mitochondrion inner membrane. It carries out the reaction succinyl-CoA + glycine + H(+) = 5-aminolevulinate + CO2 + CoA. Its pathway is porphyrin-containing compound metabolism; protoporphyrin-IX biosynthesis; 5-aminolevulinate from glycine: step 1/1. Catalyzes the pyridoxal 5'-phosphate (PLP)-dependent condensation of succinyl-CoA and glycine to form aminolevulinic acid (ALA), with CoA and CO2 as by-products. Contributes significantly to heme formation during erythropoiesis. This is 5-aminolevulinate synthase, erythroid-specific, mitochondrial (alas2) from Danio rerio (Zebrafish).